A 780-amino-acid chain; its full sequence is Copper-exporting P-type ATPase (780 aa).

The HMA domain occupies 2-67 (QRIQLNITGM…AVRRAALCTD (66 aa)). Cys-13 and Cys-16 together coordinate Cu(+). Helical transmembrane passes span 89–109 (LAVA…FAVL), 114–134 (FPGW…WAAW), 153–173 (TLIS…VFGH), 185–205 (ALLG…VFVL), 348–368 (VFVP…LIAG), and 374–394 (VFSA…GLAT). Asp-430 (4-aspartylphosphate intermediate) is an active-site residue. A run of 2 helical transmembrane segments spans residues 680–698 (FNMV…IAAA) and 704–722 (LVAG…SNSL).

It belongs to the cation transport ATPase (P-type) (TC 3.A.3) family. Type IB subfamily.

It localises to the cell membrane. The enzyme catalyses Cu(+)(in) + ATP + H2O = Cu(+)(out) + ADP + phosphate + H(+). Functionally, involved in copper export. In Mycobacterium leprae (strain TN), this protein is Copper-exporting P-type ATPase (ctpA).